The chain runs to 179 residues: Gene 49 protein (179 aa).

Disordered stretches follow at residues 1 to 38 (MKGN…VTTA) and 102 to 137 (HYAG…GEKR). Residues 18-28 (QPEPAPAPEPE) show a composition bias toward pro residues. Low complexity predominate over residues 29-38 (TAPSATVTTA). Residues 104–119 (AGSGGSAPANGGGGGQ) show a composition bias toward gly residues. Low complexity predominate over residues 120–132 (QQSRAPQAAQEAP).

This Mycobacterium (Mycobacteriophage L5) protein is Gene 49 protein (49).